The primary structure comprises 225 residues: Uridylate kinase (225 aa).

ATP is bound at residue 9–10 (GS). Gly46 is a UMP binding site. Positions 47 and 51 each coordinate ATP. Residues Asp67 and 115–121 (THPAHTT) each bind UMP. Residues Thr141, Asn142, Tyr147, and Asp150 each coordinate ATP.

The protein belongs to the UMP kinase family. Homohexamer.

It is found in the cytoplasm. The enzyme catalyses UMP + ATP = UDP + ADP. It functions in the pathway pyrimidine metabolism; CTP biosynthesis via de novo pathway; UDP from UMP (UMPK route): step 1/1. With respect to regulation, inhibited by UTP. Functionally, catalyzes the reversible phosphorylation of UMP to UDP. The sequence is that of Uridylate kinase from Methanococcus maripaludis (strain C6 / ATCC BAA-1332).